Here is a 194-residue protein sequence, read N- to C-terminus: Ribonuclease HII (194 aa).

The RNase H type-2 domain maps to 1–194; it reads MTVGVDEVGR…RLFPRDDGLR (194 aa). A divalent metal cation is bound by residues Asp-6, Glu-7, and Asp-102.

It belongs to the RNase HII family. Requires Mn(2+) as cofactor. Mg(2+) serves as cofactor.

The protein localises to the cytoplasm. The enzyme catalyses Endonucleolytic cleavage to 5'-phosphomonoester.. Its function is as follows. Endonuclease that specifically degrades the RNA of RNA-DNA hybrids. The sequence is that of Ribonuclease HII from Synechococcus sp. (strain WH7803).